A 262-amino-acid chain; its full sequence is 5'-nucleotidase SurE (262 aa).

4 residues coordinate a divalent metal cation: Asp11, Asp12, Ser43, and Asn101.

The protein belongs to the SurE nucleotidase family. Requires a divalent metal cation as cofactor.

The protein localises to the cytoplasm. The enzyme catalyses a ribonucleoside 5'-phosphate + H2O = a ribonucleoside + phosphate. Nucleotidase that shows phosphatase activity on nucleoside 5'-monophosphates. This chain is 5'-nucleotidase SurE, found in Prochlorococcus marinus (strain NATL2A).